The sequence spans 488 residues: MPGGRRGPSRQQLSRSALPSLQTLVGGMCGNGTGLRNRNGSAIGLSAPPITALITPEPVRHCHIPELPVDGGLVFEFLFFIYLLVTLFTQYINIYKTVWWYPYNHPASCTSLNFHLIDYHLAAFITVMLARRLVWALISQASQVGTSSVVKYSALIIGRLVLLTLCGWIFCWTTVNLFRNHSVLNLLFLGYPFGVYVPLCCFHQDNRSQPLPTDCGYLVPDSLVHEGANGVGGLVRPKDFLSLLRESLREQFNSPPSIPSHSCPLSPDLIRNEVECLKSDFNRRIKEVLFNSLFSAYYVAFLPLCFVKSTQYYDMRWSCEHLIMVWINAFVMLSTQLLPPKYCDLLHRSASHLGKWQKLEHGSYSNAPQHVWSENTVWPQGVLVRHSRSLYKAVGSYNVAVPSEISHARFYFLFHRPLRLLNLLLVIEGSLVLYQLYSLLRAEKWNHTLSIALILFCNYYVLFKLLRDRIVLGRAYSYPLSSYGLKPH.

2 N-linked (GlcNAc...) asparagine glycosylation sites follow: N31 and N39. Transmembrane regions (helical) follow at residues 72–92, 110–130, and 155–175; these read GLVF…TQYI, TSLN…VMLA, and LIIG…WTTV. The N-linked (GlcNAc...) asparagine glycan is linked to N180. A helical membrane pass occupies residues 182 to 202; that stretch reads SVLNLLFLGYPFGVYVPLCCF. An N-linked (GlcNAc...) asparagine glycan is attached at N206. The next 4 helical transmembrane spans lie at 287 to 307, 319 to 339, 420 to 440, and 446 to 466; these read EVLF…LCFV, CEHL…QLLP, LLNL…YSLL, and NHTL…FKLL.

This sequence belongs to the TMEM39 family.

The protein localises to the membrane. The protein is Transmembrane protein 39A-B (tmem39a-b) of Xenopus laevis (African clawed frog).